We begin with the raw amino-acid sequence, 209 residues long: Large ribosomal subunit protein uL3 (209 aa).

Positions 130–154 (RGPMSHGSKFHRAVGSMGASSDPSR) are disordered.

It belongs to the universal ribosomal protein uL3 family. As to quaternary structure, part of the 50S ribosomal subunit. Forms a cluster with proteins L14 and L19.

Its function is as follows. One of the primary rRNA binding proteins, it binds directly near the 3'-end of the 23S rRNA, where it nucleates assembly of the 50S subunit. The sequence is that of Large ribosomal subunit protein uL3 from Clostridium kluyveri (strain NBRC 12016).